Here is a 509-residue protein sequence, read N- to C-terminus: MAKAATPKETAAAKKPAAPKKAASAKTASATTVVAATGAVGRVTQVIGAVVDVAFEEGQLPKILNALETDNNGNRLVLEVAQHLGENSVRTIAMDSTEGLVRGQKVTDTGAPIAVPVGKETLGRIMNVIGEPVDEAGPLKTSARRAIHQDAPAYVDQSTEAQILVTGIKVVDLLAPYAKGGKIGLFGGAGVGKTVLIMELINNVAKAHGGYSVFAGVGERTREGNDLYHEMIESGVNKHGGGEGSKAALVYGQMNEPPGARARVALTGLTVAEQFRDEGQDVLFFVDNIFRFTQAGSEVSALLGRIPSAVGYQPTLATDMGQMQERITTTTKGSITSVQAIYVPADDLTDPAPATSFAHLDATTVLSRSIAEKGIYPAVDPLDSTSRMLDPMVVGEEHYEVARKVQGTLQRYKALQDIIAILGMDELSEEDKIAVARARKIERFLSQPFFVAEVFTGSPGKLVALEDTIKGFKGLVNGEYDHLPEAAFYMVGSIEEAVEKAKKLAAEAA.

Residues 1–28 (MAKAATPKETAAAKKPAAPKKAASAKTA) are disordered. 187 to 194 (GGAGVGKT) is a binding site for ATP.

This sequence belongs to the ATPase alpha/beta chains family. In terms of assembly, F-type ATPases have 2 components, CF(1) - the catalytic core - and CF(0) - the membrane proton channel. CF(1) has five subunits: alpha(3), beta(3), gamma(1), delta(1), epsilon(1). CF(0) has three main subunits: a(1), b(2) and c(9-12). The alpha and beta chains form an alternating ring which encloses part of the gamma chain. CF(1) is attached to CF(0) by a central stalk formed by the gamma and epsilon chains, while a peripheral stalk is formed by the delta and b chains.

The protein localises to the cell inner membrane. It carries out the reaction ATP + H2O + 4 H(+)(in) = ADP + phosphate + 5 H(+)(out). Produces ATP from ADP in the presence of a proton gradient across the membrane. The catalytic sites are hosted primarily by the beta subunits. The protein is ATP synthase subunit beta of Sinorhizobium medicae (strain WSM419) (Ensifer medicae).